Here is a 129-residue protein sequence, read N- to C-terminus: Glycine cleavage system H protein (129 aa).

One can recognise a Lipoyl-binding domain in the interval Thr-24 to Lys-106. At Lys-65 the chain carries N6-lipoyllysine.

It belongs to the GcvH family. The glycine cleavage system is composed of four proteins: P, T, L and H. (R)-lipoate serves as cofactor.

The glycine cleavage system catalyzes the degradation of glycine. The H protein shuttles the methylamine group of glycine from the P protein to the T protein. The chain is Glycine cleavage system H protein from Salmonella paratyphi B (strain ATCC BAA-1250 / SPB7).